Consider the following 193-residue polypeptide: Major structural subunit of bundle-forming pilus (193 aa).

Positions 1-13 (MVSKIMNKKYEKG) are excised as a propeptide. Residue Leu-14 is modified to N-methylleucine. The chain crosses the membrane as a helical span at residues 14–35 (LSLIESAMVLALAATVTAGVMF). Cysteines 129 and 179 form a disulfide.

This sequence belongs to the N-Me-Phe pilin family. In terms of assembly, 10 to 100 laterally aligned filaments or bundle-forming pili coalesce into rope-like bundles. These form linkages between the bacteria within the enteropathogenic E.coli (EPEC) microcolonies that are attached to epithelial cells.

Its subcellular location is the fimbrium. The protein localises to the membrane. Major repeating bundle-forming pilus (BFP) subunit. Is required for EPEC localized adherence. The polypeptide is Major structural subunit of bundle-forming pilus (bfpA) (Escherichia coli O111:H-).